We begin with the raw amino-acid sequence, 397 residues long: Methylthioribose kinase (397 aa).

ATP-binding positions include Asn43, Lys60, and 114-116 (EDL). Asp232 is a binding site for substrate. 249–251 (DPE) is an ATP binding site. Arg340 is a substrate binding site.

Belongs to the methylthioribose kinase family. As to quaternary structure, homodimer.

It catalyses the reaction 5-(methylsulfanyl)-D-ribose + ATP = 5-(methylsulfanyl)-alpha-D-ribose 1-phosphate + ADP + H(+). It participates in amino-acid biosynthesis; L-methionine biosynthesis via salvage pathway; S-methyl-5-thio-alpha-D-ribose 1-phosphate from S-methyl-5'-thioadenosine (hydrolase route): step 2/2. In terms of biological role, catalyzes the phosphorylation of methylthioribose into methylthioribose-1-phosphate. The protein is Methylthioribose kinase of Bacillus pumilus (strain SAFR-032).